The sequence spans 349 residues: Glycerol-3-phosphate dehydrogenase [NAD(+)], cytoplasmic (349 aa).

10–15 (GSGNWG) is a binding site for NAD(+). K120 serves as a coordination point for substrate. Residue A153 participates in NAD(+) binding. S154 is subject to Phosphoserine. K204 acts as the Proton acceptor in catalysis. R269 contacts NAD(+). 269–270 (RN) serves as a coordination point for substrate. K289 carries the N6-succinyllysine modification. Residues K296 and Q298 each coordinate NAD(+). Y326 carries the post-translational modification Phosphotyrosine.

This sequence belongs to the NAD-dependent glycerol-3-phosphate dehydrogenase family. In terms of assembly, homodimer.

The protein resides in the cytoplasm. The catalysed reaction is sn-glycerol 3-phosphate + NAD(+) = dihydroxyacetone phosphate + NADH + H(+). Its function is as follows. Has glycerol-3-phosphate dehydrogenase activity. The sequence is that of Glycerol-3-phosphate dehydrogenase [NAD(+)], cytoplasmic from Rattus norvegicus (Rat).